The primary structure comprises 99 residues: MKFFVVAALFAGALAAPTELEARTYPVVLCPEGLYANPVCADVDVLGILCLNAVSPSEAPRDANHFREICAKIGKQARCAVLPVLNQAVLCNKPVGITN.

The N-terminal stretch at 1-15 (MKFFVVAALFAGALA) is a signal peptide. 2 disulfides stabilise this stretch: Cys-30–Cys-79 and Cys-40–Cys-70.

It belongs to the cerato-ulmin hydrophobin family. In terms of assembly, homotetramer. Further self-assembles to form highly ordered films at water-air interfaces through intermolecular interactions.

It is found in the secreted. The protein localises to the cell wall. Its function is as follows. Aerial growth, conidiation, and dispersal of filamentous fungi in the environment rely upon a capability of their secreting small amphipathic proteins called hydrophobins (HPBs) with low sequence identity. Class I can self-assemble into an outermost layer of rodlet bundles on aerial cell surfaces, conferring cellular hydrophobicity that supports fungal growth, development and dispersal; whereas Class II form highly ordered films at water-air interfaces through intermolecular interactions but contribute nothing to the rodlet structure. HYD2 is a class II hydrophobin that contributes to the fruiting body development. In Cordyceps militaris (Caterpillar fungus), this protein is Class II hydrophobin 2.